The following is a 20-amino-acid chain: Non-specific lipid-transfer protein (20 aa).

It belongs to the plant LTP family.

Functionally, plant non-specific lipid-transfer proteins transfer phospholipids as well as galactolipids across membranes. May play a role in wax or cutin deposition in the cell walls of expanding epidermal cells and certain secretory tissues. The sequence is that of Non-specific lipid-transfer protein from Citrus sinensis (Sweet orange).